The chain runs to 104 residues: L-rhamnose mutarotase (104 aa).

Y18 provides a ligand contact to substrate. Residue H22 is the Proton donor of the active site. Residues Y41 and 76–77 (WW) contribute to the substrate site.

It belongs to the rhamnose mutarotase family. Homodimer.

It localises to the cytoplasm. The catalysed reaction is alpha-L-rhamnose = beta-L-rhamnose. It participates in carbohydrate metabolism; L-rhamnose metabolism. Involved in the anomeric conversion of L-rhamnose. This Escherichia coli O8 (strain IAI1) protein is L-rhamnose mutarotase.